We begin with the raw amino-acid sequence, 185 residues long: Ribosome-recycling factor (185 aa).

This sequence belongs to the RRF family.

The protein localises to the cytoplasm. Responsible for the release of ribosomes from messenger RNA at the termination of protein biosynthesis. May increase the efficiency of translation by recycling ribosomes from one round of translation to another. The polypeptide is Ribosome-recycling factor (Exiguobacterium sibiricum (strain DSM 17290 / CCUG 55495 / CIP 109462 / JCM 13490 / 255-15)).